A 93-amino-acid polypeptide reads, in one-letter code: ATP synthase subunit c (93 aa).

Helical transmembrane passes span 13 to 33 and 58 to 78; these read AIGV…GMGI and ISLA…FILL.

Belongs to the ATPase C chain family. As to quaternary structure, F-type ATPases have 2 components, F(1) - the catalytic core - and F(0) - the membrane proton channel. F(1) has five subunits: alpha(3), beta(3), gamma(1), delta(1), epsilon(1). F(0) has three main subunits: a(1), b(2) and c(10-14). The alpha and beta chains form an alternating ring which encloses part of the gamma chain. F(1) is attached to F(0) by a central stalk formed by the gamma and epsilon chains, while a peripheral stalk is formed by the delta and b chains.

It is found in the cell inner membrane. F(1)F(0) ATP synthase produces ATP from ADP in the presence of a proton or sodium gradient. F-type ATPases consist of two structural domains, F(1) containing the extramembraneous catalytic core and F(0) containing the membrane proton channel, linked together by a central stalk and a peripheral stalk. During catalysis, ATP synthesis in the catalytic domain of F(1) is coupled via a rotary mechanism of the central stalk subunits to proton translocation. Functionally, key component of the F(0) channel; it plays a direct role in translocation across the membrane. A homomeric c-ring of between 10-14 subunits forms the central stalk rotor element with the F(1) delta and epsilon subunits. The polypeptide is ATP synthase subunit c (Campylobacter hominis (strain ATCC BAA-381 / DSM 21671 / CCUG 45161 / LMG 19568 / NCTC 13146 / CH001A)).